A 680-amino-acid chain; its full sequence is WD repeat-containing protein 48 homolog (680 aa).

WD repeat units lie at residues 26–65, 71–110, 113–152, 164–203, 206–245, 248–287, 290–329, and 350–389; these read QHRN…SEKY, HHND…CMST, THRD…ALTA, GSKD…RSMK, GHTE…CVQT, VHKE…NKTL, EEQA…RCTM, and KGGA…KKEQ. The disordered stretch occupies residues 592–616; that stretch reads ETTPSGGNANNSLQNSQSDANSEGS.

Belongs to the WD repeat WDR48 family. Catalytic component of the Usp12-46 deubiquitylase complex consisting of Usp12-46, Wdr20 and Uaf1; regulatory subunit that, together wtih Wdr20, stabilizes Usp12-46. The Usp12-46 deubiquitylase complex associates with arr/arrow; the interaction leads to deubiquitination and stabilization of arr/arrow.

Functionally, regulatory component of the Usp12-46 deubiquitylase complex. activates deubiquitination by increasing the catalytic turnover without increasing the affinity of deubiquitinating enzymes for the substrate. The complex deubiquitylates the wg/wingless-signaling receptor arr/arrow, which stabilizes the receptor and increases its concentration at the cell surface; this enhances the sensitivity of cells to wg/wingless-signal stimulation. This increases the amplitude and spatial range of the signaling response to the wg/wingless morphogen gradient, facilitating the precise concentration-dependent regulation of its target genes. Together with Wdr20 and Usp12-46 required for wg/wingless-mediated signaling in the wing imaginal disc and for wg/wingless-dependent regulation of intestinal stem cell proliferation. This chain is WD repeat-containing protein 48 homolog, found in Drosophila erecta (Fruit fly).